Here is an 87-residue protein sequence, read N- to C-terminus: U3-theraphotoxin-Hhn1a 3 (87 aa).

The signal sequence occupies residues 1–24 (MVNMKASMFLTFAGLVLLFVVCYA). Residues 25–52 (PESEEKEFPKEMLSSIFAVDNDFKQEER) constitute a propeptide that is removed on maturation. Disulfide bonds link cysteine 54/cysteine 67, cysteine 61/cysteine 72, and cysteine 66/cysteine 79.

This sequence belongs to the neurotoxin 10 (Hwtx-1) family. 51 (Hntx-8) subfamily. Hntx-8 sub-subfamily. In terms of tissue distribution, expressed by the venom gland.

The protein resides in the secreted. Functionally, ion channel inhibitor. The polypeptide is U3-theraphotoxin-Hhn1a 3 (Cyriopagopus hainanus (Chinese bird spider)).